The primary structure comprises 99 residues: DNA-directed RNA polymerase subunit omega (99 aa).

The protein belongs to the RNA polymerase subunit omega family. As to quaternary structure, the RNAP catalytic core consists of 2 alpha, 1 beta, 1 beta' and 1 omega subunit. When a sigma factor is associated with the core the holoenzyme is formed, which can initiate transcription.

It catalyses the reaction RNA(n) + a ribonucleoside 5'-triphosphate = RNA(n+1) + diphosphate. Promotes RNA polymerase assembly. Latches the N- and C-terminal regions of the beta' subunit thereby facilitating its interaction with the beta and alpha subunits. This Deinococcus deserti (strain DSM 17065 / CIP 109153 / LMG 22923 / VCD115) protein is DNA-directed RNA polymerase subunit omega.